A 968-amino-acid chain; its full sequence is C-1-tetrahydrofolate synthase, cytoplasmic (968 aa).

Residues Met-1–Leu-338 are methylenetetrahydrofolate dehydrogenase and cyclohydrolase. Residues Tyr-86–Lys-90 and Val-133–Met-135 contribute to the substrate site. Residues Gly-205 to Ser-207 and Ser-230 contribute to the NADP(+) site. Pro-305–Gly-309 provides a ligand contact to substrate. The tract at residues Gln-339–Phe-968 is formyltetrahydrofolate synthetase. An ATP-binding site is contributed by Thr-413 to Thr-420.

In the N-terminal section; belongs to the tetrahydrofolate dehydrogenase/cyclohydrolase family. The protein in the C-terminal section; belongs to the formate--tetrahydrofolate ligase family. As to quaternary structure, homodimer. Present in all tissues.

It is found in the cytoplasm. The enzyme catalyses (6R)-5,10-methylene-5,6,7,8-tetrahydrofolate + NADP(+) = (6R)-5,10-methenyltetrahydrofolate + NADPH. It carries out the reaction (6R)-5,10-methenyltetrahydrofolate + H2O = (6R)-10-formyltetrahydrofolate + H(+). The catalysed reaction is (6S)-5,6,7,8-tetrahydrofolate + formate + ATP = (6R)-10-formyltetrahydrofolate + ADP + phosphate. It participates in one-carbon metabolism; tetrahydrofolate interconversion. This is C-1-tetrahydrofolate synthase, cytoplasmic (pug) from Drosophila melanogaster (Fruit fly).